The following is a 205-amino-acid chain: Protease (205 aa).

Active-site residues include His-54, Asp-71, and Cys-120.

This sequence belongs to the peptidase C5 family. In terms of assembly, interacts with protease cofactor pVI-C; this interaction is necessary for protease activation.

It localises to the virion. It is found in the host nucleus. The catalysed reaction is Cleaves proteins of the adenovirus and its host cell at two consensus sites: -Yaa-Xaa-Gly-Gly-|-Xaa- and -Yaa-Xaa-Gly-Xaa-|-Gly- (in which Yaa is Met, Ile or Leu, and Xaa is any amino acid).. Requires DNA and protease cofactor for maximal activation. Inside nascent virions, becomes partially activated by binding to the viral DNA, allowing it to cleave the cofactor that binds to the protease and fully activates it. Actin, like the viral protease cofactor, seems to act as a cofactor in the cleavage of cytokeratin 18 and of actin itself. Its function is as follows. Cleaves viral precursor proteins (pTP, pIIIa, pVI, pVII, pVIII, and pX) inside newly assembled particles giving rise to mature virions. Protease complexed to its cofactor slides along the viral DNA to specifically locate and cleave the viral precursors. Mature virions have a weakened organization compared to the unmature virions, thereby facilitating subsequent uncoating. Without maturation, the particle lacks infectivity and is unable to uncoat. Late in adenovirus infection, in the cytoplasm, may participate in the cytoskeleton destruction. Cleaves host cell cytoskeletal keratins K7 and K18. This Bos taurus (Bovine) protein is Protease.